The primary structure comprises 213 residues: Ribonuclease HII (213 aa).

Residues 27 to 213 enclose the RNase H type-2 domain; it reads HAVAGVDEAG…FRGVKEHVAP (187 aa). Residues aspartate 33, glutamate 34, and aspartate 125 each coordinate a divalent metal cation.

Belongs to the RNase HII family. It depends on Mn(2+) as a cofactor. The cofactor is Mg(2+).

It is found in the cytoplasm. The catalysed reaction is Endonucleolytic cleavage to 5'-phosphomonoester.. Its function is as follows. Endonuclease that specifically degrades the RNA of RNA-DNA hybrids. This chain is Ribonuclease HII, found in Geobacter metallireducens (strain ATCC 53774 / DSM 7210 / GS-15).